We begin with the raw amino-acid sequence, 122 residues long: Small ribosomal subunit protein uS13 (122 aa).

The segment at 93–122 (RRGLPVRGQRTKTNARTRKGPKKTIAGKKK) is disordered.

It belongs to the universal ribosomal protein uS13 family. In terms of assembly, part of the 30S ribosomal subunit. Forms a loose heterodimer with protein S19. Forms two bridges to the 50S subunit in the 70S ribosome.

Functionally, located at the top of the head of the 30S subunit, it contacts several helices of the 16S rRNA. In the 70S ribosome it contacts the 23S rRNA (bridge B1a) and protein L5 of the 50S subunit (bridge B1b), connecting the 2 subunits; these bridges are implicated in subunit movement. Contacts the tRNAs in the A and P-sites. This chain is Small ribosomal subunit protein uS13, found in Corynebacterium jeikeium (strain K411).